A 95-amino-acid polypeptide reads, in one-letter code: MSRVCELTGVSVQSGHNVSHSQRKTKRKFLPNLQNVSLFSDSLKKAFKFKVVARAMRTLDKVGGLDCYLLSASDKTLSKSAIEVKKIIKNNESKS.

It belongs to the bacterial ribosomal protein bL28 family.

The chain is Large ribosomal subunit protein bL28 from Orientia tsutsugamushi (strain Ikeda) (Rickettsia tsutsugamushi).